The following is a 512-amino-acid chain: Glucose-6-phosphate 1-dehydrogenase (512 aa).

Residues R61, 103–104 (EF), and K171 contribute to the NADP(+) site. Substrate-binding residues include H201, K205, E239, and D258. The active-site Proton acceptor is H263. K360 and K365 together coordinate substrate. The tract at residues 479 to 512 (QDSSPSFPNYPAGSSGPKEADALIERDGRSWRPL) is disordered. A compositionally biased stretch (basic and acidic residues) spans 496–512 (KEADALIERDGRSWRPL).

It belongs to the glucose-6-phosphate dehydrogenase family.

It catalyses the reaction D-glucose 6-phosphate + NADP(+) = 6-phospho-D-glucono-1,5-lactone + NADPH + H(+). The protein operates within carbohydrate degradation; pentose phosphate pathway; D-ribulose 5-phosphate from D-glucose 6-phosphate (oxidative stage): step 1/3. Catalyzes the oxidation of glucose 6-phosphate to 6-phosphogluconolactone. This Chlamydia pneumoniae (Chlamydophila pneumoniae) protein is Glucose-6-phosphate 1-dehydrogenase.